Reading from the N-terminus, the 130-residue chain is Small ribosomal subunit protein uS9 (130 aa).

It belongs to the universal ribosomal protein uS9 family.

In Edwardsiella ictaluri (strain 93-146), this protein is Small ribosomal subunit protein uS9.